Here is a 257-residue protein sequence, read N- to C-terminus: Fructose-2,6-bisphosphatase TIGAR B (257 aa).

Histidine 11 functions as the Tele-phosphohistidine intermediate in the catalytic mechanism. Glutamate 89 serves as the catalytic Proton donor/acceptor.

This sequence belongs to the phosphoglycerate mutase family.

The protein localises to the cytoplasm. It is found in the nucleus. It localises to the mitochondrion. It carries out the reaction beta-D-fructose 2,6-bisphosphate + H2O = beta-D-fructose 6-phosphate + phosphate. Its function is as follows. Fructose-bisphosphatase hydrolyzing fructose-2,6-bisphosphate as well as fructose-1,6-bisphosphate. Acts as a negative regulator of glycolysis by lowering intracellular levels of fructose-2,6-bisphosphate in a p53/TP53-dependent manner, resulting in the pentose phosphate pathway (PPP) activation and NADPH production. Contributes to the generation of reduced glutathione to cause a decrease in intracellular reactive oxygen species (ROS) content, correlating with its ability to protect cells from oxidative or metabolic stress-induced cell death. May play a role in mitophagy inhibition. The protein is Fructose-2,6-bisphosphatase TIGAR B of Danio rerio (Zebrafish).